The following is a 271-amino-acid chain: MTESVARLRGEQLTLGYGKYTVAENLTVEIPDGHFTAIIGPNGCGKSTLLRTLSRLMTPAHGHVWLDGEHIQHYASKEVARRIGLLAQNATTPGDITVQELVARGRYPHQPLFTRWRKEDEEAVTKAMQATGITHLADQSVDTLSGGQRQRAWIAMVLAQETAIMLLDEPTTWLDISHQIDLLELLSELNREKGYTLAAVLHDLNQACRYASHLIALREGKIVAQGAPKEIVTAELIERIYGLRCMIIDDPVAGTPLVVPLGRTAPSTANS.

The region spanning 8–244 (LRGEQLTLGY…ELIERIYGLR (237 aa)) is the ABC transporter domain. 40–47 (GPNGCGKS) provides a ligand contact to ATP.

It belongs to the ABC transporter superfamily. The complex is composed of two ATP-binding proteins (FepC), two transmembrane proteins (FepD and FepG) and a solute-binding protein (FepB).

The protein resides in the cell inner membrane. The enzyme catalyses Fe(III)-enterobactin(out) + ATP + H2O = Fe(III)-enterobactin(in) + ADP + phosphate + H(+). In terms of biological role, part of the ABC transporter complex FepBDGC involved in ferric enterobactin uptake. Responsible for energy coupling to the transport system. The sequence is that of Ferric enterobactin transport ATP-binding protein FepC (fepC) from Escherichia coli (strain K12).